The following is a 414-amino-acid chain: Protein IQ-DOMAIN 8 (414 aa).

Positions 14–21 (NKKNITDD) match the Nuclear localization signal 1 motif. The segment at 40–61 (LISSSKGFKSRGGSYGTPSLGS) is disordered. IQ domains lie at 92–120 (REWA…AVVR), 121–143 (IQAI…CMQA), and 144–169 (LVRV…EKPS). The segment at 119–132 (VRIQAIFRGRQVRK) is calmodulin-binding. Disordered stretches follow at residues 156–190 (NRGP…SPGS), 218–244 (HQPR…SCKS), and 262–329 (GRLM…SGSF). Positions 164–184 (ELEKPSDQQKDDPAKQAEKGW) are enriched in basic and acidic residues. Over residues 231-244 (KQGSVKKNNGSCKS) the composition is skewed to polar residues. A compositionally biased stretch (basic and acidic residues) spans 274-289 (NARKSESSVSEHDTVQ). Low complexity predominate over residues 307 to 328 (SSSATSSESSSTSQSPVPFSGS). The Nuclear localization signal 2 motif lies at 336–343 (YRKPSYMS). The segment at 347-398 (SIKAKQRRSGSSSSCSKTPFEKKQSMSYNGDVNVRRSAGSDPLNNQWTDLYP) is disordered.

It belongs to the IQD family. Binds to multiple calmodulin (CaM) in the presence of Ca(2+) and CaM-like proteins.

It is found in the nucleus. The protein resides in the cytoplasm. The protein localises to the cytoskeleton. It localises to the nucleus envelope. Its function is as follows. May be involved in cooperative interactions with calmodulins or calmodulin-like proteins. Recruits calmodulin proteins to microtubules, thus being a potential scaffold in cellular signaling and trafficking. May associate with nucleic acids and regulate gene expression at the transcriptional or post-transcriptional level. The polypeptide is Protein IQ-DOMAIN 8 (Arabidopsis thaliana (Mouse-ear cress)).